The primary structure comprises 244 residues: Eukaryotic translation initiation factor 6 (244 aa).

This sequence belongs to the eIF-6 family. As to quaternary structure, monomer. Associates with the 60S ribosomal subunit.

The protein resides in the cytoplasm. It is found in the nucleus. The protein localises to the nucleolus. Its function is as follows. Binds to the 60S ribosomal subunit and prevents its association with the 40S ribosomal subunit to form the 80S initiation complex in the cytoplasm. May also be involved in ribosome biogenesis. The protein is Eukaryotic translation initiation factor 6 (eif6) of Dictyostelium discoideum (Social amoeba).